We begin with the raw amino-acid sequence, 345 residues long: Phenylalanine--tRNA ligase alpha subunit (345 aa).

E253 contributes to the Mg(2+) binding site.

Belongs to the class-II aminoacyl-tRNA synthetase family. Phe-tRNA synthetase alpha subunit type 1 subfamily. Tetramer of two alpha and two beta subunits. Mg(2+) serves as cofactor.

The protein resides in the cytoplasm. The enzyme catalyses tRNA(Phe) + L-phenylalanine + ATP = L-phenylalanyl-tRNA(Phe) + AMP + diphosphate + H(+). This Lawsonia intracellularis (strain PHE/MN1-00) protein is Phenylalanine--tRNA ligase alpha subunit.